Reading from the N-terminus, the 79-residue chain is Ponericin-W-like 32.1 (79 aa).

A signal peptide spans 1-23; it reads MKCKKQLLVIFFAYFLVVNESEA. A propeptide spanning residues 49–79 is cleaved from the precursor; it reads RALMKRDLEDIMDPYQKNLKLDRYLRRLAMD.

It belongs to the non-disulfide-bridged peptide (NDBP) superfamily. Medium-length antimicrobial peptide (group 3) family. Ponericin-W subfamily. As to expression, expressed by the venom gland.

It localises to the secreted. It is found in the target cell membrane. Functionally, antimicrobial peptide with potent activity against a range of Gram-positive and Gram-negative bacteria. Has high hemolytic activity against erythrocytes. May act by disrupting the integrity of the bacterial cell membrane. This chain is Ponericin-W-like 32.1, found in Lychas mucronatus (Chinese swimming scorpion).